The primary structure comprises 130 residues: Small ribosomal subunit protein uS11c (130 aa).

Belongs to the universal ribosomal protein uS11 family. In terms of assembly, part of the 30S ribosomal subunit.

It localises to the plastid. The protein resides in the chloroplast. The chain is Small ribosomal subunit protein uS11c from Bigelowiella natans (Pedinomonas minutissima).